Consider the following 888-residue polypeptide: DNA mismatch repair protein MutS (888 aa).

The tract at residues 249 to 271 is disordered; sequence IGQRPPLSPPSREASGSTMAIDP. Residue 638–645 participates in ATP binding; that stretch reads GPNMAGKS.

The protein belongs to the DNA mismatch repair MutS family.

Functionally, this protein is involved in the repair of mismatches in DNA. It is possible that it carries out the mismatch recognition step. This protein has a weak ATPase activity. This is DNA mismatch repair protein MutS from Nitrobacter winogradskyi (strain ATCC 25391 / DSM 10237 / CIP 104748 / NCIMB 11846 / Nb-255).